The sequence spans 576 residues: K(+)/H(+) antiporter NhaP2 (576 aa).

13 consecutive transmembrane segments (helical) span residues 6-26, 34-54, 58-78, 87-107, 109-129, 163-183, 185-205, 219-239, 242-262, 271-291, 299-319, 335-355, and 359-379; these read INSF…LSPM, ILLI…GGIL, YSTA…DGGM, VALW…TSIT, MMAA…GAIV, PMAV…DTEM, FSFM…LGLG, LADG…YAAS, LGGS…NKPT, VLDG…GLLL, ILIP…PVAV, WFIS…VFPM, and LPGA…SLLV. One can recognise an RCK C-terminal domain in the interval 405 to 486; it reads SGVEIYPSSE…LEALSNLFSQ (82 aa).

The protein belongs to the monovalent cation:proton antiporter 1 (CPA1) transporter (TC 2.A.36) family. NhaP2 subfamily.

Its subcellular location is the cell inner membrane. The catalysed reaction is K(+)(in) + H(+)(out) = K(+)(out) + H(+)(in). K(+)/H(+) antiporter that extrudes potassium in exchange for external protons and maintains the internal concentration of potassium under toxic levels. In Shewanella baltica (strain OS223), this protein is K(+)/H(+) antiporter NhaP2.